A 185-amino-acid chain; its full sequence is Peptidyl-tRNA hydrolase (185 aa).

Tyr-14 contributes to the tRNA binding site. His-19 (proton acceptor) is an active-site residue. The tRNA site is built by Phe-64, Asn-66, and Asn-112.

The protein belongs to the PTH family. In terms of assembly, monomer.

The protein localises to the cytoplasm. It catalyses the reaction an N-acyl-L-alpha-aminoacyl-tRNA + H2O = an N-acyl-L-amino acid + a tRNA + H(+). Functionally, hydrolyzes ribosome-free peptidyl-tRNAs (with 1 or more amino acids incorporated), which drop off the ribosome during protein synthesis, or as a result of ribosome stalling. In terms of biological role, catalyzes the release of premature peptidyl moieties from peptidyl-tRNA molecules trapped in stalled 50S ribosomal subunits, and thus maintains levels of free tRNAs and 50S ribosomes. The sequence is that of Peptidyl-tRNA hydrolase from Caldanaerobacter subterraneus subsp. tengcongensis (strain DSM 15242 / JCM 11007 / NBRC 100824 / MB4) (Thermoanaerobacter tengcongensis).